The following is a 221-amino-acid chain: Succinate--CoA ligase [ADP-forming] subunit beta, mitochondrial (221 aa).

One can recognise an ATP-grasp domain in the interval 1 to 122 (DVVIKAQVLA…DSNSAYRQKI (122 aa)). Lys-5 serves as a coordination point for ATP. N6-acetyllysine is present on residues Lys-22 and Lys-26. Residue Ser-114 is modified to Phosphoserine. Thr-139 is subject to Phosphothreonine. 171–173 (GIM) provides a ligand contact to substrate. Lys-196 is modified (N6-acetyllysine).

Belongs to the succinate/malate CoA ligase beta subunit family. ATP-specific subunit beta subfamily. Heterodimer of an alpha and a beta subunit. The beta subunit determines specificity for ATP. Interacts with ALAS2.

The protein localises to the mitochondrion. The catalysed reaction is succinate + ATP + CoA = succinyl-CoA + ADP + phosphate. Its pathway is carbohydrate metabolism; tricarboxylic acid cycle; succinate from succinyl-CoA (ligase route): step 1/1. Functionally, ATP-specific succinyl-CoA synthetase functions in the citric acid cycle (TCA), coupling the hydrolysis of succinyl-CoA to the synthesis of ATP and thus represents the only step of substrate-level phosphorylation in the TCA. The beta subunit provides nucleotide specificity of the enzyme and binds the substrate succinate, while the binding sites for coenzyme A and phosphate are found in the alpha subunit. This chain is Succinate--CoA ligase [ADP-forming] subunit beta, mitochondrial, found in Mesocricetus auratus (Golden hamster).